Here is a 31-residue protein sequence, read N- to C-terminus: Cyclotide mech-6 (31 aa).

The cyclopeptide (Gly-Asn) cross-link spans 1 to 31 (GVIPCGESCVFIPCISSVVGCTCKNKVCYRN). 3 disulfides stabilise this stretch: Cys5/Cys21, Cys9/Cys23, and Cys14/Cys28.

Post-translationally, this is a cyclic peptide. Contains 3 disulfide bonds.

In terms of biological role, probably participates in a plant defense mechanism (Potential). Binds to and induces leakage in phospholipd membranes, particularly ones containing 1-palmitoyl-2-oleophosphatidylethanolamine (POPE). The sequence is that of Cyclotide mech-6 from Melicytus chathamicus (Chatham Island mahoe).